Here is a 153-residue protein sequence, read N- to C-terminus: UPF0266 membrane protein YPTB1631 (153 aa).

The next 3 helical transmembrane spans lie at 6 to 26, 45 to 65, and 67 to 87; these read LVLV…EFIM, LDCM…VMAH, and APLT…ISYI.

The protein belongs to the UPF0266 family.

The protein localises to the cell inner membrane. The sequence is that of UPF0266 membrane protein YPTB1631 from Yersinia pseudotuberculosis serotype I (strain IP32953).